The following is a 259-amino-acid chain: BTB/POZ domain-containing protein KCTD4 (259 aa).

The tract at residues 1-25 (MERKINRREKEKEYEGKHNSLEDTD) is disordered. In terms of domain architecture, BTB spans 33 to 134 (TLMTLNVGGY…EVKSRWEKEQ (102 aa)).

The sequence is that of BTB/POZ domain-containing protein KCTD4 (KCTD4) from Homo sapiens (Human).